Reading from the N-terminus, the 449-residue chain is Tubulin beta chain (449 aa).

The GTP site is built by Gln-11, Glu-69, Ser-138, Gly-142, Thr-143, Gly-144, Asn-204, and Asn-226. Glu-69 serves as a coordination point for Mg(2+). The segment at 426–449 is disordered; that stretch reads QDATAEEEGEFDEEEGVMDAEGAA. The segment covering 429–443 has biased composition (acidic residues); the sequence is TAEEEGEFDEEEGVM.

It belongs to the tubulin family. In terms of assembly, dimer of alpha and beta chains. A typical microtubule is a hollow water-filled tube with an outer diameter of 25 nm and an inner diameter of 15 nM. Alpha-beta heterodimers associate head-to-tail to form protofilaments running lengthwise along the microtubule wall with the beta-tubulin subunit facing the microtubule plus end conferring a structural polarity. Microtubules usually have 13 protofilaments but different protofilament numbers can be found in some organisms and specialized cells. Mg(2+) is required as a cofactor.

It localises to the cytoplasm. The protein localises to the cytoskeleton. Tubulin is the major constituent of microtubules, a cylinder consisting of laterally associated linear protofilaments composed of alpha- and beta-tubulin heterodimers. Microtubules grow by the addition of GTP-tubulin dimers to the microtubule end, where a stabilizing cap forms. Below the cap, tubulin dimers are in GDP-bound state, owing to GTPase activity of alpha-tubulin. This is Tubulin beta chain from Eimeria tenella (Coccidian parasite).